We begin with the raw amino-acid sequence, 602 residues long: Elongation factor 4 (602 aa).

The tr-type G domain occupies 7–189 (KYIRNFSIVA…AIVNKVPAPD (183 aa)). Residues 19 to 24 (DHGKST) and 136 to 139 (NKID) contribute to the GTP site.

The protein belongs to the TRAFAC class translation factor GTPase superfamily. Classic translation factor GTPase family. LepA subfamily.

The protein localises to the cell membrane. It catalyses the reaction GTP + H2O = GDP + phosphate + H(+). In terms of biological role, required for accurate and efficient protein synthesis under certain stress conditions. May act as a fidelity factor of the translation reaction, by catalyzing a one-codon backward translocation of tRNAs on improperly translocated ribosomes. Back-translocation proceeds from a post-translocation (POST) complex to a pre-translocation (PRE) complex, thus giving elongation factor G a second chance to translocate the tRNAs correctly. Binds to ribosomes in a GTP-dependent manner. This chain is Elongation factor 4, found in Clostridium botulinum (strain Kyoto / Type A2).